We begin with the raw amino-acid sequence, 254 residues long: Type II methyl-directed restriction enzyme DpnI (254 aa).

This sequence belongs to the DpnI type II restriction endonuclease family.

The catalysed reaction is Endonucleolytic cleavage of DNA to give specific double-stranded fragments with terminal 5'-phosphates.. In terms of biological role, an M and P subtype restriction enzyme that recognizes the double-stranded, methylated sequence 5'-G(Me)ATC-3' and cleaves after A-2. This Streptococcus pneumoniae serotype 4 (strain ATCC BAA-334 / TIGR4) protein is Type II methyl-directed restriction enzyme DpnI.